The following is a 102-amino-acid chain: Spexin prohormone 1 (102 aa).

The N-terminal stretch at 1–26 (MKDLRTLAAYALALLLLATFVSYSRS) is a signal peptide. Positions 27–35 (APMGSFQRR) are excised as a propeptide. At Gln-49 the chain carries Glutamine amide. Residues 50-102 (GRRFVSEDRNEGDLYDTIRLESQSQNTENLSISKAAAFLLNVLQQARDEGEPY) constitute a propeptide that is removed on maturation.

It belongs to the spexin family. As to expression, expressed in the anterior hypothalamus, ventromedial thalamic nucleus and medial longitudinal fasciculus of the brain (at protein level). Widely expressed. Expressed predominantly in the spleen, kidney, liver and testis. Expressed in olfactory bulb, pituitary, telencephalon, diencephalons, spinal cord, optic tectum, cerebellum and hypothalamus of the brain.

The protein localises to the secreted. Its subcellular location is the extracellular space. It is found in the cytoplasmic vesicle. It localises to the secretory vesicle. Functionally, plays a role in the regulation of food intake and body weight and in reproduction. May also play a role as a central modulator of cardiovascular and renal function and nociception. Brain administration of the peptide inhibits food consumption. May function as a satiety factor for feeding control. Involved in the negative regulation of the reproductive axis by inhibiting luteinizing hormone secretion from pituitary cells. This chain is Spexin prohormone 1 (spx), found in Carassius auratus (Goldfish).